The following is a 744-amino-acid chain: Cytoskeleton-associated protein 2-like (744 aa).

5 disordered regions span residues 35–56, 76–169, 182–216, 317–337, and 428–452; these read YLKA…GPKK, LQSR…THVE, KENL…SSLA, TVTE…VLQG, and NKTA…GAQT. Composition is skewed to polar residues over residues 76 to 86, 102 to 129, and 137 to 154; these read LQSRPANITRS, SESV…STDG, and GSLN…VTDQ. Lys195 participates in a covalent cross-link: Glycyl lysine isopeptide (Lys-Gly) (interchain with G-Cter in SUMO1); alternate. Lys195 participates in a covalent cross-link: Glycyl lysine isopeptide (Lys-Gly) (interchain with G-Cter in SUMO2); alternate. Positions 199–216 are enriched in polar residues; the sequence is ESWTINKPQTNQTKSSLA. At Ser744 the chain carries Phosphoserine.

This sequence belongs to the CKAP2 family. Ubiquitinated by the anaphase promoting complex/cyclosome (APC/C).

The protein localises to the cytoplasm. The protein resides in the cytoskeleton. It is found in the spindle pole. Functionally, microtubule-associated protein required for mitotic spindle formation and cell-cycle progression in neural progenitor cells. This is Cytoskeleton-associated protein 2-like (CKAP2L) from Bos taurus (Bovine).